We begin with the raw amino-acid sequence, 161 residues long: DNA-directed RNA polymerase III subunit RPC9 (161 aa).

The segment at 75-96 is disordered; that stretch reads QEDEGEERESSGAKDAEKSGIS. Residues 82–96 are compositionally biased toward basic and acidic residues; the sequence is RESSGAKDAEKSGIS.

It belongs to the eukaryotic RPC9 RNA polymerase subunit family. In terms of assembly, component of the RNA polymerase III (Pol III) complex consisting of 17 subunits. Forms a Pol III subcomplex with RPC25/RPC8. Interacts with BURF1/TDS4.

It is found in the nucleus. Its function is as follows. DNA-dependent RNA polymerase catalyzes the transcription of DNA into RNA using the four ribonucleoside triphosphates as substrates. Specific peripheric component of RNA polymerase III which synthesizes small RNAs, such as 5S rRNA and tRNAs. The RPC25/RPC8-RPC17/RPC9 subcomplex may bind Pol III transcripts emerging from the adjacent exit pore during elongation. The sequence is that of DNA-directed RNA polymerase III subunit RPC9 (RPC17) from Saccharomyces cerevisiae (strain ATCC 204508 / S288c) (Baker's yeast).